The chain runs to 394 residues: Cytochrome c oxidase subunit 2, mitochondrial (394 aa).

Residues 1–119 constitute a mitochondrion transit peptide; sequence ILCPLEAFIV…RNSRLIHSTS (119 aa). Residues 120–181 are Mitochondrial intermembrane-facing; it reads KIVPNSEIQN…MQGIIDLHHD (62 aa). A helical transmembrane segment spans residues 182-198; it reads IFFFVIQIGVFVSWVLL. At 199-226 the chain is on the mitochondrial matrix side; it reads RALWHFRSKMNPIPQRIVHGTTIEILWT. The chain crosses the membrane as a helical span at residues 227–243; it reads IFPSVILMFIAIPSFAL. At 244 to 394 the chain is on the mitochondrial intermembrane side; that stretch reads LYSMDDIVVD…YGSWVSSQVN (151 aa). Cu cation is bound by residues H327, C362, E364, C366, H370, and M373. Residue E364 coordinates Mg(2+).

This sequence belongs to the cytochrome c oxidase subunit 2 family. Component of the cytochrome c oxidase (complex IV, CIV), a multisubunit enzyme composed of a catalytic core of 3 subunits and several supernumerary subunits. The complex exists as a monomer or a dimer and forms supercomplexes (SCs) in the inner mitochondrial membrane with ubiquinol-cytochrome c oxidoreductase (cytochrome b-c1 complex, complex III, CIII). Cu cation is required as a cofactor.

It is found in the mitochondrion inner membrane. The enzyme catalyses 4 Fe(II)-[cytochrome c] + O2 + 8 H(+)(in) = 4 Fe(III)-[cytochrome c] + 2 H2O + 4 H(+)(out). Component of the cytochrome c oxidase, the last enzyme in the mitochondrial electron transport chain which drives oxidative phosphorylation. The respiratory chain contains 3 multisubunit complexes succinate dehydrogenase (complex II, CII), ubiquinol-cytochrome c oxidoreductase (cytochrome b-c1 complex, complex III, CIII) and cytochrome c oxidase (complex IV, CIV), that cooperate to transfer electrons derived from NADH and succinate to molecular oxygen, creating an electrochemical gradient over the inner membrane that drives transmembrane transport and the ATP synthase. Cytochrome c oxidase is the component of the respiratory chain that catalyzes the reduction of oxygen to water. Electrons originating from reduced cytochrome c in the intermembrane space (IMS) are transferred via the dinuclear copper A center (CU(A)) of subunit 2 and heme A of subunit 1 to the active site in subunit 1, a binuclear center (BNC) formed by heme A3 and copper B (CU(B)). The BNC reduces molecular oxygen to 2 water molecules using 4 electrons from cytochrome c in the IMS and 4 protons from the mitochondrial matrix. This chain is Cytochrome c oxidase subunit 2, mitochondrial (COX2), found in Glycine max (Soybean).